We begin with the raw amino-acid sequence, 59 residues long: Potassium channel toxin alpha-KTx 15.4 (59 aa).

Positions 1–22 are cleaved as a signal peptide; sequence MKFSSIILLTLLICSMSIFGNC. Residue Gln23 is modified to Pyrrolidone carboxylic acid. Cystine bridges form between Cys30–Cys50, Cys35–Cys55, and Cys39–Cys57.

In terms of tissue distribution, expressed by the venom gland.

It localises to the secreted. Functionally, blocker of A-type voltage-gated potassium channels of cerebellar granular cells. May also inhibit Kv4/KCND when coexpressed with DPP6 or DPP10. The occlusion of the outer entry of the K(+) conducting pore is partially reversible and affects both open and closed channels. It shares the same target in rat brain than BmTX3 (AC Q8I0L5) and AmmTX3 (AC P60208). The polypeptide is Potassium channel toxin alpha-KTx 15.4 (Androctonus australis (Sahara scorpion)).